A 388-amino-acid chain; its full sequence is Succinate--CoA ligase [ADP-forming] subunit beta (388 aa).

The ATP-grasp domain maps to 9-244; that stretch reads KEIFARYGLP…PTQESELEVK (236 aa). ATP contacts are provided by residues lysine 46, 53–55, glutamate 99, threonine 102, and glutamate 107; that span reads GRG. Positions 199 and 213 each coordinate Mg(2+). Substrate-binding positions include asparagine 264 and 321–323; that span reads GIL.

This sequence belongs to the succinate/malate CoA ligase beta subunit family. Heterotetramer of two alpha and two beta subunits. It depends on Mg(2+) as a cofactor.

It catalyses the reaction succinate + ATP + CoA = succinyl-CoA + ADP + phosphate. It carries out the reaction GTP + succinate + CoA = succinyl-CoA + GDP + phosphate. It functions in the pathway carbohydrate metabolism; tricarboxylic acid cycle; succinate from succinyl-CoA (ligase route): step 1/1. In terms of biological role, succinyl-CoA synthetase functions in the citric acid cycle (TCA), coupling the hydrolysis of succinyl-CoA to the synthesis of either ATP or GTP and thus represents the only step of substrate-level phosphorylation in the TCA. The beta subunit provides nucleotide specificity of the enzyme and binds the substrate succinate, while the binding sites for coenzyme A and phosphate are found in the alpha subunit. This is Succinate--CoA ligase [ADP-forming] subunit beta from Persephonella marina (strain DSM 14350 / EX-H1).